The primary structure comprises 30 residues: Antifungal protein Lap (30 aa).

In terms of biological role, displays antifungal activity against M.arachidicola and P.piricola, but not against R.solani, C.gossypii and C.comatus. Inhibits mycelial growth in P.piricola with an IC(50) of 70 nM. Displays very low cell-free translation inhibitory activity in a rabbit reticulocyte lysate system (IC(50)=70 uM) but is able to inhibit HIV-1 reverse transcriptase activity (IC(50)=5.2 nM). This Lyophyllum shimeji (Hon-shimeji) protein is Antifungal protein Lap.